A 226-amino-acid chain; its full sequence is UPF0758 protein M6_Spy0838 (226 aa).

Residues 103–225 enclose the MPN domain; it reads SVLTSVQVAE…YYSFREKSTL (123 aa). Zn(2+)-binding residues include histidine 174, histidine 176, and aspartate 187. The JAMM motif signature appears at 174 to 187; sequence HNHPSGNIEPSSND.

The protein belongs to the UPF0758 family.

This Streptococcus pyogenes serotype M6 (strain ATCC BAA-946 / MGAS10394) protein is UPF0758 protein M6_Spy0838.